We begin with the raw amino-acid sequence, 64 residues long: Peptide Ctri9677 (64 aa).

A signal peptide spans 1 to 22 (MKNNTILFTFLIVFLIASQIEA). Leucine 36 bears the Leucine amide mark. Positions 40-64 (SEDREFFDFFTDDNLAALEKALKEY) are excised as a propeptide.

The protein belongs to the non-disulfide-bridged peptide (NDBP) superfamily. Short antimicrobial peptide (group 4) family. As to expression, expressed by the venom gland.

Its subcellular location is the secreted. Functionally, antimicrobial peptide. The protein is Peptide Ctri9677 of Chaerilus tricostatus (Scorpion).